Consider the following 799-residue polypeptide: Protein scabrous (799 aa).

Positions 1 to 51 are cleaved as a signal peptide; it reads MRDWQTFPDLQKKKVSRDHLNCPATMAGSNVLWPILLAVVLLQISVAFVSG. The tract at residues 287–316 is disordered; sequence TRKDGSSASVEEESGSQEANQEQTGLETTA. N-linked (GlcNAc...) asparagine glycosylation is present at asparagine 372. The segment covering 489-498 has biased composition (basic residues); sequence LNKPHKRPHH. The disordered stretch occupies residues 489–509; the sequence is LNKPHKRPHHQNVQAQMPQDD. The 205-residue stretch at 533 to 737 folds into the Fibrinogen C-terminal domain; sequence AIINKLPHDC…SSRMLVKRLP (205 aa). An intrachain disulfide couples cysteine 542 to cysteine 568. N-linked (GlcNAc...) asparagine glycosylation is found at asparagine 587, asparagine 618, and asparagine 660. The cysteines at positions 687 and 700 are disulfide-linked. N-linked (GlcNAc...) asparagine glycans are attached at residues asparagine 744 and asparagine 787.

Post-translationally, possesses five pairs of dibasic residues that may be the target of proteolytic processing.

Its subcellular location is the late endosome. In terms of biological role, involved in regulation of neurogenesis. May encode a lateral inhibitor of R8 differentiation. In conjunction with Gp150, promotes Notch activation in response to Delta by regulating acquisition of insensitivity to Delta in a subset of cells. The sequence is that of Protein scabrous (sca) from Drosophila melanogaster (Fruit fly).